Reading from the N-terminus, the 491-residue chain is MVYDGAVKDQESSANPASASAALSEASAAASEVTAAAAAGAGAGAAEEGAAVSGRPPRPPHDKRLGVRHPLKHRRFRAGGKVMVEPGDPPSAQEVADEEASEVEQEAAPVEREPPQEEGGDVEVSSAPAEMEVVEGDAMEVSPEPAVAVGESELEGRPGEEEEVSSPVVSQGERKQETAAAAPVPAVEEKKHKDQENKHKEREREKERERVDEVGYMSGGWKSEDGFLSCGYSSFRGKRASMEDFYDIKSSKIDDKQISLFGIFDGHGGSRAAEYLKEHLFENLMKHPEFMTNTKLAISETYKKTDSEFLDSESHTHRDDGSTASTAVLVGNHLYVANVGDSRAVISKAGKAIALSEDHKPNRSDERKRIESAGGVVMWAGTWRVGGVLAMSRAFGNRLLKQFVVADPEIQEQEIDDELEFLILASDGLWDVVPNEDAVSLVKIEEEPEAAARKLTETAFSRGSGDNITCIVVKFQHDKMDGDSSPTSDKS.

A compositionally biased stretch (basic and acidic residues) spans 1 to 11 (MVYDGAVKDQE). Positions 1–211 (MVYDGAVKDQ…REREKERERV (211 aa)) are disordered. Residues 12-54 (SSANPASASAALSEASAAASEVTAAAAAGAGAGAAEEGAAVSG) show a composition bias toward low complexity. Basic residues predominate over residues 66–78 (GVRHPLKHRRFRA). Residues 95-105 (VADEEASEVEQ) are compositionally biased toward acidic residues. Over residues 187 to 211 (VEEKKHKDQENKHKEREREKERERV) the composition is skewed to basic and acidic residues. The region spanning 229–475 (SCGYSSFRGK…DNITCIVVKF (247 aa)) is the PPM-type phosphatase domain. Mn(2+) is bound by residues D265, G266, D427, and D466.

This sequence belongs to the PP2C family. Mg(2+) is required as a cofactor. It depends on Mn(2+) as a cofactor.

It carries out the reaction O-phospho-L-seryl-[protein] + H2O = L-seryl-[protein] + phosphate. The catalysed reaction is O-phospho-L-threonyl-[protein] + H2O = L-threonyl-[protein] + phosphate. In Oryza sativa subsp. japonica (Rice), this protein is Probable protein phosphatase 2C 52.